The following is a 402-amino-acid chain: Succinylornithine transaminase (402 aa).

At K252 the chain carries N6-(pyridoxal phosphate)lysine.

Belongs to the class-III pyridoxal-phosphate-dependent aminotransferase family. AstC subfamily. Pyridoxal 5'-phosphate is required as a cofactor.

The catalysed reaction is N(2)-succinyl-L-ornithine + 2-oxoglutarate = N-succinyl-L-glutamate 5-semialdehyde + L-glutamate. Its pathway is amino-acid degradation; L-arginine degradation via AST pathway; L-glutamate and succinate from L-arginine: step 3/5. Its function is as follows. Catalyzes the transamination of N(2)-succinylornithine and alpha-ketoglutarate into N(2)-succinylglutamate semialdehyde and glutamate. Can also act as an acetylornithine aminotransferase. The sequence is that of Succinylornithine transaminase from Photorhabdus laumondii subsp. laumondii (strain DSM 15139 / CIP 105565 / TT01) (Photorhabdus luminescens subsp. laumondii).